The following is a 172-amino-acid chain: Adrenodoxin-like protein 1, mitochondrial (172 aa).

In terms of domain architecture, 2Fe-2S ferredoxin-type spans 57–159 (VNITYVDKDG…GMELELPKAT (103 aa)). [2Fe-2S] cluster-binding residues include Cys94, Cys100, Cys103, and Cys140.

The protein belongs to the adrenodoxin/putidaredoxin family. [2Fe-2S] cluster is required as a cofactor.

It localises to the mitochondrion matrix. Required for ecdysteroidogenesis in the prothoracic gland which is necessary for larval to pupal transition. In Drosophila melanogaster (Fruit fly), this protein is Adrenodoxin-like protein 1, mitochondrial.